The sequence spans 208 residues: NAD-dependent protein deacylase (208 aa).

The 208-residue stretch at 1–208 folds into the Deacetylase sirtuin-type domain; that stretch reads MKPICVVLSG…NTGFNPVTGW (208 aa). Residue 10-29 coordinates NAD(+); that stretch reads GAGISAESGIPTYRAEDGLW. Substrate contacts are provided by Tyr54 and Arg57. NAD(+) is bound at residue 87–90; the sequence is QNVE. His105 (proton acceptor) is an active-site residue. Residues 170-172 and 197-199 each bind NAD(+); these read GTS and NPN.

It belongs to the sirtuin family. Class III subfamily.

It is found in the cytoplasm. It carries out the reaction N(6)-acetyl-L-lysyl-[protein] + NAD(+) + H2O = 2''-O-acetyl-ADP-D-ribose + nicotinamide + L-lysyl-[protein]. It catalyses the reaction N(6)-succinyl-L-lysyl-[protein] + NAD(+) + H2O = 2''-O-succinyl-ADP-D-ribose + nicotinamide + L-lysyl-[protein]. In terms of biological role, NAD-dependent lysine deacetylase and desuccinylase that specifically removes acetyl and succinyl groups on target proteins. Modulates the activities of several proteins which are inactive in their acylated form. This Aggregatibacter actinomycetemcomitans (Actinobacillus actinomycetemcomitans) protein is NAD-dependent protein deacylase.